We begin with the raw amino-acid sequence, 233 residues long: Outer membrane protein MIP (233 aa).

The signal sequence occupies residues 1–20; sequence MKMKLVTAAVMGLAMSTAMA. The PPIase FKBP-type domain occupies 144 to 233; it reads SDTVTVEYTG…IHLISVKKSS (90 aa).

This sequence belongs to the FKBP-type PPIase family.

The protein resides in the cell outer membrane. The enzyme catalyses [protein]-peptidylproline (omega=180) = [protein]-peptidylproline (omega=0). Functionally, essential virulence factor associated with macrophage infectivity. Exhibits PPIase activity. This Legionella pneumophila (strain Corby) protein is Outer membrane protein MIP (mip).